The chain runs to 628 residues: Chaperone protein HtpG (628 aa).

Residues methionine 1–arginine 340 are a; substrate-binding. The interval glutamate 341 to arginine 557 is b. Residues leucine 558 to alanine 628 form a c region.

This sequence belongs to the heat shock protein 90 family. Homodimer.

The protein resides in the cytoplasm. Its function is as follows. Molecular chaperone. Has ATPase activity. In Methylobacillus flagellatus (strain ATCC 51484 / DSM 6875 / VKM B-1610 / KT), this protein is Chaperone protein HtpG.